The sequence spans 320 residues: PUP1 protein homolog (320 aa).

2 helical membrane passes run 66-85 and 100-119; these read MWGG…AYRY and FVLG…RSMY. The segment at 205 to 320 is disordered; the sequence is GGVFNGSPFM…QSGRYGGNRS (116 aa). Ser230 bears the Phosphoserine mark. Residues 253-266 show a composition bias toward polar residues; that stretch reads GDNSSSSSWENIRN. Positions 267 to 284 are enriched in basic and acidic residues; the sequence is TSRDQSQESDASVDHESD.

The protein belongs to the PUP1 family.

The protein localises to the mitochondrion membrane. The sequence is that of PUP1 protein homolog from Saccharomyces cerevisiae (strain ATCC 204508 / S288c) (Baker's yeast).